The sequence spans 148 residues: SPbeta prophage-derived uncharacterized protein YomK (148 aa).

2 helical membrane passes run 72 to 92 and 104 to 124; these read WGIG…LFGV and NALI…RNII.

It localises to the cell membrane. In Bacillus subtilis (strain 168), this protein is SPbeta prophage-derived uncharacterized protein YomK (yomK).